The sequence spans 351 residues: Sulfate/thiosulfate import ATP-binding protein CysA (351 aa).

Residues 5–235 (IVVADATKRY…PANAFVMSFL (231 aa)) enclose the ABC transporter domain. Residue 37-44 (GPSGSGKS) participates in ATP binding.

Belongs to the ABC transporter superfamily. Sulfate/tungstate importer (TC 3.A.1.6) family. The complex is composed of two ATP-binding proteins (CysA), two transmembrane proteins (CysT and CysW) and a solute-binding protein (CysP).

It is found in the cell membrane. The catalysed reaction is sulfate(out) + ATP + H2O = sulfate(in) + ADP + phosphate + H(+). The enzyme catalyses thiosulfate(out) + ATP + H2O = thiosulfate(in) + ADP + phosphate + H(+). Part of the ABC transporter complex CysAWTP involved in sulfate/thiosulfate import. Responsible for energy coupling to the transport system. The protein is Sulfate/thiosulfate import ATP-binding protein CysA of Mycobacterium bovis (strain ATCC BAA-935 / AF2122/97).